The chain runs to 777 residues: Degenerin unc-8 (777 aa).

Over 1–128 (MSPLLTWNLI…VATSSFFGRY (128 aa)) the chain is Cytoplasmic. The chain crosses the membrane as a helical span at residues 129–149 (VWAALFMCMLMAFLLQTYWTM). Residues 150 to 689 (SEYLQYRTII…KETAGYTLVN (540 aa)) lie on the Extracellular side of the membrane. 7 N-linked (GlcNAc...) asparagine glycosylation sites follow: Asn274, Asn319, Asn357, Asn411, Asn453, Asn533, and Asn597. Residues 690-710 (LFSDFGGNIGLWIGFSVITFA) form a helical membrane-spanning segment. Residues 711–777 (EFAELFCEIC…NESTKELMSK (67 aa)) lie on the Cytoplasmic side of the membrane. Residues 752–777 (QRSPKKSQPGEDEVSTNESTKELMSK) form a disordered region.

The protein belongs to the amiloride-sensitive sodium channel (TC 1.A.6) family.

The protein resides in the membrane. Sodium permeable non-voltage-sensitive ion channel. Involved in the activity-dependent removal of selected presynaptic proteins, such as synaptobrevin snb-1, and Ras-related rab-3, in the remodeling of GABAergic motor neurons. The polypeptide is Degenerin unc-8 (Caenorhabditis elegans).